The sequence spans 1058 residues: Translation initiation factor IF-2 (1058 aa).

Positions 1–12 (MNDTKTPGDKTL) are enriched in basic and acidic residues. The segment at 1 to 468 (MNDTKTPGDK…MTGHRGMQES (468 aa)) is disordered. The segment covering 54–81 (APGEAGAPSGTPAAAPAATPAPAAAAPR) has biased composition (low complexity). Residues 82–95 (PATPAPAAPRPAAP) are compositionally biased toward pro residues. Over residues 96 to 108 (ATPAQPAAEAKAP) the composition is skewed to low complexity. Over residues 109–119 (APAPTPAPAAP) the composition is skewed to pro residues. Low complexity-rich tracts occupy residues 120–156 (AAPV…VEVP) and 164–228 (EPVA…QRPG). The segment covering 244–271 (RSGGPGSDRRGGPGGQNRPGQNRQGGSG) has biased composition (gly residues). Residues 292–364 (ARVREVEERR…ARKRFGEETG (73 aa)) show a composition bias toward basic and acidic residues. Over residues 368 to 396 (GASAPSTSTARPLTPRPAGTTTTTGAPAA) the composition is skewed to low complexity. The segment covering 452–461 (FRRRTQRMTG) has biased composition (basic residues). One can recognise a tr-type G domain in the interval 555–725 (PRPPVVTIMG…SLQSEVLDLK (171 aa)). Residues 564 to 571 (GHVDHGKT) form a G1 region. 564–571 (GHVDHGKT) contributes to the GTP binding site. The G2 stretch occupies residues 589 to 593 (GITQH). Residues 611-614 (DTPG) are G3. GTP is bound by residues 611 to 615 (DTPGH) and 665 to 668 (NKID). A G4 region spans residues 665 to 668 (NKID). The tract at residues 701–703 (SAT) is G5.

The protein belongs to the TRAFAC class translation factor GTPase superfamily. Classic translation factor GTPase family. IF-2 subfamily.

It is found in the cytoplasm. Functionally, one of the essential components for the initiation of protein synthesis. Protects formylmethionyl-tRNA from spontaneous hydrolysis and promotes its binding to the 30S ribosomal subunits. Also involved in the hydrolysis of GTP during the formation of the 70S ribosomal complex. This Azorhizobium caulinodans (strain ATCC 43989 / DSM 5975 / JCM 20966 / LMG 6465 / NBRC 14845 / NCIMB 13405 / ORS 571) protein is Translation initiation factor IF-2.